The following is a 504-amino-acid chain: Signal recognition particle subunit SRP54 (504 aa).

Residues 1-295 form an NG domain region; that stretch reads MVLADLGRKI…KTQPFISKLL (295 aa). GTP is bound by residues 108–115, 190–194, and 248–251; these read GLQGSGKT, DTSGR, and TKLD. The segment at 296–504 is M-domain; it reads GMGDIEGLID…MKGMMGFNNM (209 aa).

This sequence belongs to the GTP-binding SRP family. SRP54 subfamily. Component of a signal recognition particle (SRP) complex that consists of a 7SL RNA molecule of 300 nucleotides and six protein subunits: SRP72, SRP68, SRP54, SRP19, SRP14 and SRP9. Interacts with RNPS1. Interacts with the SRP receptor subunit SRPRA.

It is found in the nucleus speckle. The protein localises to the cytoplasm. Its subcellular location is the endoplasmic reticulum. The catalysed reaction is GTP + H2O = GDP + phosphate + H(+). Component of the signal recognition particle (SRP) complex, a ribonucleoprotein complex that mediates the cotranslational targeting of secretory and membrane proteins to the endoplasmic reticulum (ER). As part of the SRP complex, associates with the SRP receptor (SR) component SRPRA to target secretory proteins to the endoplasmic reticulum membrane. Binds to the signal sequence of presecretory proteins when they emerge from the ribosomes. Displays basal GTPase activity, and stimulates reciprocal GTPase activation of the SR subunit SRPRA. Forms a guanosine 5'-triphosphate (GTP)-dependent complex with the SR subunit SRPRA. SR compaction and GTPase mediated rearrangement of SR drive SRP-mediated cotranslational protein translocation into the ER. Requires the presence of SRP9/SRP14 and/or SRP19 to stably interact with RNA. Plays a role in proliferation and differentiation of granulocytic cells, neutrophils migration capacity and exocrine pancreas development. This Homo sapiens (Human) protein is Signal recognition particle subunit SRP54.